Reading from the N-terminus, the 446-residue chain is ATP-dependent protease ATPase subunit HslU (446 aa).

Residues Val18, 60–65, Asp259, Glu324, and Arg396 each bind ATP; that span reads GVGKTE.

This sequence belongs to the ClpX chaperone family. HslU subfamily. A double ring-shaped homohexamer of HslV is capped on each side by a ring-shaped HslU homohexamer. The assembly of the HslU/HslV complex is dependent on binding of ATP.

The protein resides in the cytoplasm. ATPase subunit of a proteasome-like degradation complex; this subunit has chaperone activity. The binding of ATP and its subsequent hydrolysis by HslU are essential for unfolding of protein substrates subsequently hydrolyzed by HslV. HslU recognizes the N-terminal part of its protein substrates and unfolds these before they are guided to HslV for hydrolysis. In Dechloromonas aromatica (strain RCB), this protein is ATP-dependent protease ATPase subunit HslU.